The primary structure comprises 213 residues: MKDKQFAIPKATAKRLSLYYRIFKRFHAEKIERANSKQIAEAIGIDSATVRRDFSYFGELGRRGFGYDVKKLMTFFADLLNDNSITNVMLVGIGNMGHALLHYRFHERNKMKIIMAFDLDDHPEVGTQTPDGIPIYGISQIKDKIKDTDVKTAILTVPSVKSQEVANLLVDAGVKGILSFSPVHLHLPKDVVVQYVDLTSELQTLLYFMRKED.

Residues 18 to 57 constitute a DNA-binding region (H-T-H motif); that stretch reads LYYRIFKRFHAEKIERANSKQIAEAIGIDSATVRRDFSYF. Residue 92–97 participates in NAD(+) binding; sequence GIGNMG.

The protein belongs to the transcriptional regulatory Rex family. As to quaternary structure, homodimer.

The protein resides in the cytoplasm. Functionally, modulates transcription in response to changes in cellular NADH/NAD(+) redox state. Binds to the promoter of the aldehyde-alcohol dehydrogenase adhE gene. Functions as a redox-dependent repressor of adhE expression. This is Redox-sensing transcriptional repressor Rex from Streptococcus pneumoniae (strain ATCC BAA-255 / R6).